A 252-amino-acid chain; its full sequence is Ubiquinone biosynthesis O-methyltransferase (252 aa).

4 residues coordinate S-adenosyl-L-methionine: R45, G76, D97, and M141.

The protein belongs to the methyltransferase superfamily. UbiG/COQ3 family.

The enzyme catalyses a 3-demethylubiquinol + S-adenosyl-L-methionine = a ubiquinol + S-adenosyl-L-homocysteine + H(+). It carries out the reaction a 3-(all-trans-polyprenyl)benzene-1,2-diol + S-adenosyl-L-methionine = a 2-methoxy-6-(all-trans-polyprenyl)phenol + S-adenosyl-L-homocysteine + H(+). It participates in cofactor biosynthesis; ubiquinone biosynthesis. In terms of biological role, O-methyltransferase that catalyzes the 2 O-methylation steps in the ubiquinone biosynthetic pathway. This chain is Ubiquinone biosynthesis O-methyltransferase, found in Caulobacter vibrioides (strain ATCC 19089 / CIP 103742 / CB 15) (Caulobacter crescentus).